The sequence spans 1421 residues: Cytoadherence-linked asexual protein 3.2 (1421 aa).

The first 24 residues, 1-24 (MVSFFKTPIIIFFFLLCLNEKVLC), serve as a signal peptide directing secretion. 4 disulfide bridges follow: Cys335–Cys363, Cys409–Cys415, Cys519–Cys547, and Cys523–Cys544. A helical membrane pass occupies residues 1203–1223 (NFFMELANGFMYAFCFFAISQ). A disulfide bridge links Cys1352 with Cys1355. The interval 1371–1413 (GDKNTNETTEIKKQTSTYIDTEKMNEADSADSDDEKDFDTPDN) is disordered. Residues 1398–1412 (DSADSDDEKDFDTPD) are compositionally biased toward acidic residues.

Component of the RhopH complex. RhopH complex is at least composed of CLAG3.1/CLAG3.2, RhopH2 and RhopH3 with a 1:1:1 subunit stoichiometry. CLAG3.1/CLAG3.2 mediates subunit association through independent contacts with RhopH2 and RhopH3, which do not directly interact with one another. Interacts with RhopH2. Interacts with RhopH3.

It localises to the host cell membrane. The protein localises to the parasitophorous vacuole membrane. It is found in the host cytoplasm. The protein resides in the cytoplasmic vesicle. Its subcellular location is the secretory vesicle. It localises to the rhoptry. Functionally, participates in the formation of new permeability pathways in Plasmodium-infected erythrocytes enabling the uptake of nutrients from the blood plasma. The protein is Cytoadherence-linked asexual protein 3.2 of Plasmodium falciparum.